A 102-amino-acid polypeptide reads, in one-letter code: MSVSKQHVVRLYRNILKTSKLFPYTYREYTIRRTRDKFKELKVESDPAKFEQGIKDSEKLLEIIQRQSIINGMYNKRNLVVEGIDDTAEGEVKKSFENASQS.

This sequence belongs to the complex I LYR family.

The protein resides in the mitochondrion. In terms of biological role, required for mitochondrial iron-sulfur (Fe-S) protein biosynthesis. In Schizosaccharomyces pombe (strain 972 / ATCC 24843) (Fission yeast), this protein is Protein isd11 (isd11).